A 779-amino-acid chain; its full sequence is Kazrin (779 aa).

Positions 79-261 form a coiled coil; it reads AQVLLREEVV…LATLTKDVPK (183 aa). The segment at 295–366 is disordered; that stretch reads QQTLYHSHPP…PGPVQKSLHN (72 aa). Phosphoserine is present on residues S356, S371, and S391. Residues 403 to 429 are disordered; sequence KSLDPGLFDDSDSQCSPTRHSLSLSEG. Over residues 415-426 the composition is skewed to polar residues; that stretch reads SQCSPTRHSLSL. SAM domains follow at residues 450–515, 528–592, and 616–683; these read WKAG…YRDA, DHHW…LYQV, and WTNQ…STIF. The interval 685-779 is disordered; it reads PSNSTGIRES…GYGSLEVTNV (95 aa). Over residues 736-746 the composition is skewed to basic and acidic residues; it reads SSKEPDFHDDY.

The protein belongs to the kazrin family. In terms of tissue distribution, expressed in skin interfollicular epidermis and hair follicles. Expressed in tongue epithelium basal suprabasal layers.

It localises to the cell junction. The protein resides in the nucleus. It is found in the cytoplasm. Its subcellular location is the cytoskeleton. Component of the cornified envelope of keratinocytes. May be involved in the interplay between adherens junctions and desmosomes. The function in the nucleus is not known. The polypeptide is Kazrin (Kazn) (Mus musculus (Mouse)).